An 887-amino-acid chain; its full sequence is Phosphatidylinositol 3-kinase catalytic subunit type 3 (887 aa).

The 150-residue stretch at 35–184 folds into the C2 PI3K-type domain; that stretch reads YKAVLEDPML…LAKLTKAHRQ (150 aa). The interval 149–170 is disordered; sequence VEADGSEPTKTPGRTSSTLSED. Positions 156–170 are enriched in polar residues; sequence PTKTPGRTSSTLSED. The residue at position 163 (threonine 163) is a Phosphothreonine; by AMPK. A Phosphoserine; by AMPK modification is found at serine 165. Phosphoserine occurs at positions 244, 261, and 282. The PIK helical domain occupies 283–520; sequence DHDLKPNAAT…PKTHEMYLNV (238 aa). Positions 447–467 are disordered; sequence TSPLPSVSSPPPASKTKEVPD. One can recognise a PI3K/PI4K catalytic domain in the interval 605-871; the sequence is IPETATLFKS…LIDESVHALF (267 aa). The interval 611–617 is G-loop; that stretch reads LFKSALM. Positions 740–748 are catalytic loop; the sequence is GVGDRHLDN. Residues 759-780 are activation loop; it reads HIDFGYILGRDPKPLPPPMKLN.

This sequence belongs to the PI3/PI4-kinase family. In terms of assembly, component of the PI3K (PI3KC3/PI3K-III/class III phosphatidylinositol 3-kinase) complex the core of which is composed of the catalytic subunit PIK3C3, the regulatory subunit PIK3R4 and BECN1 associating with additional regulatory/auxiliary subunits to form alternative complex forms. Alternative complex forms containing a fourth regulatory subunit in a mutually exclusive manner are: the PI3K complex I (PI3KC3-C1) containing ATG14, and the PI3K complex II (PI3KC3-C2) containing UVRAG. PI3KC3-C1 displays a V-shaped architecture with PIK3R4 serving as a bridge between PIK3C3 and the ATG14:BECN1 subcomplex. Both, PI3KC3-C1 and PI3KC3-C2, can associate with further regulatory subunits such as RUBCN, SH3GLB1/Bif-1 and AMBRA1. PI3KC3-C1 probably associates with PIK3CB. Interacts with RAB7A in the presence of PIK3R4. Interacts with AMBRA1. Interacts with BECN1P1/BECN2. Interacts with SLAMF1. May be a component of a complex composed of RAB5A (in GDP-bound form), DYN2 and PIK3C3. Interacts with NCKAP1L. Interacts with ATG14; this interaction is increased in the absence of TMEM39A. Interacts with STEEP1; the interaction is STING1-dependent and required for trafficking of STING1 from the endoplasmic reticulum. Interacts with YWHAG. Interacts with ARMC3. The cofactor is Mn(2+). In terms of processing, ubiquitinated via 'Lys-29'- and 'Lys-48'-linked ubiquitination by UBE3C, promoting its degradation. Deubiquitination by ZRANB1/TRABID promotes its stabilization, leading to autophagosome maturation. Ubiquitously expressed, with a highest expression in skeletal muscle.

The protein resides in the midbody. It is found in the late endosome. Its subcellular location is the cytoplasmic vesicle. The protein localises to the autophagosome. It carries out the reaction a 1,2-diacyl-sn-glycero-3-phospho-(1D-myo-inositol) + ATP = a 1,2-diacyl-sn-glycero-3-phospho-(1D-myo-inositol-3-phosphate) + ADP + H(+). Its function is as follows. Catalytic subunit of the PI3K complex that mediates formation of phosphatidylinositol 3-phosphate; different complex forms are believed to play a role in multiple membrane trafficking pathways: PI3KC3-C1 is involved in initiation of autophagosomes and PI3KC3-C2 in maturation of autophagosomes and endocytosis. As part of PI3KC3-C1, promotes endoplasmic reticulum membrane curvature formation prior to vesicle budding. Involved in regulation of degradative endocytic trafficking and required for the abscission step in cytokinesis, probably in the context of PI3KC3-C2. Involved in the transport of lysosomal enzyme precursors to lysosomes. Required for transport from early to late endosomes. In terms of biological role, (Microbial infection) Kinase activity is required for SARS coronavirus-2/SARS-CoV-2 replication. The sequence is that of Phosphatidylinositol 3-kinase catalytic subunit type 3 from Homo sapiens (Human).